The primary structure comprises 213 residues: 3-demethoxyubiquinol 3-hydroxylase (213 aa).

Fe cation contacts are provided by Glu62, Glu92, His95, Glu144, Glu176, and His179.

It belongs to the COQ7 family. It depends on Fe cation as a cofactor.

The protein resides in the cell membrane. It carries out the reaction a 5-methoxy-2-methyl-3-(all-trans-polyprenyl)benzene-1,4-diol + AH2 + O2 = a 3-demethylubiquinol + A + H2O. The protein operates within cofactor biosynthesis; ubiquinone biosynthesis. Its function is as follows. Catalyzes the hydroxylation of 2-nonaprenyl-3-methyl-6-methoxy-1,4-benzoquinol during ubiquinone biosynthesis. The protein is 3-demethoxyubiquinol 3-hydroxylase of Legionella pneumophila (strain Paris).